Consider the following 470-residue polypeptide: Pyruvate kinase I (470 aa).

Position 32 (R32) interacts with substrate. N34, S36, D66, and T67 together coordinate K(+). 34 to 37 lines the ATP pocket; it reads NFSH. ATP-binding residues include R73 and K156. A substrate-binding site is contributed by K220. E222 contacts Mg(2+). Residues G245, D246, and T278 each contribute to the substrate site. Position 246 (D246) interacts with Mg(2+).

The protein belongs to the pyruvate kinase family. In terms of assembly, homotetramer. Mg(2+) serves as cofactor. K(+) is required as a cofactor.

The enzyme catalyses pyruvate + ATP = phosphoenolpyruvate + ADP + H(+). It functions in the pathway carbohydrate degradation; glycolysis; pyruvate from D-glyceraldehyde 3-phosphate: step 5/5. With respect to regulation, belongs to type I PK; fructose 1,6-bisphosphate-activated. Functionally, catalyzes the formation of pyruvate in the last step of glycolysis, it is irreversible under physiological conditions. The reaction is critical for the control of metabolic flux in the second part of glycolysis. In Salmonella typhimurium (strain LT2 / SGSC1412 / ATCC 700720), this protein is Pyruvate kinase I (pykF).